The sequence spans 166 residues: 2-C-methyl-D-erythritol 2,4-cyclodiphosphate synthase (166 aa).

The a divalent metal cation site is built by Asp-17 and His-19. 4-CDP-2-C-methyl-D-erythritol 2-phosphate-binding positions include 17–19 and 43–44; these read DSH and HS. Residue His-51 participates in a divalent metal cation binding. 4-CDP-2-C-methyl-D-erythritol 2-phosphate is bound by residues 65–67, 109–115, and Arg-151; these read DIG and AQKPKMA.

It belongs to the IspF family. Homotrimer. A divalent metal cation serves as cofactor.

It carries out the reaction 4-CDP-2-C-methyl-D-erythritol 2-phosphate = 2-C-methyl-D-erythritol 2,4-cyclic diphosphate + CMP. The protein operates within isoprenoid biosynthesis; isopentenyl diphosphate biosynthesis via DXP pathway; isopentenyl diphosphate from 1-deoxy-D-xylulose 5-phosphate: step 4/6. Involved in the biosynthesis of isopentenyl diphosphate (IPP) and dimethylallyl diphosphate (DMAPP), two major building blocks of isoprenoid compounds. Catalyzes the conversion of 4-diphosphocytidyl-2-C-methyl-D-erythritol 2-phosphate (CDP-ME2P) to 2-C-methyl-D-erythritol 2,4-cyclodiphosphate (ME-CPP) with a corresponding release of cytidine 5-monophosphate (CMP). This Rhodopirellula baltica (strain DSM 10527 / NCIMB 13988 / SH1) protein is 2-C-methyl-D-erythritol 2,4-cyclodiphosphate synthase.